A 469-amino-acid chain; its full sequence is Sulfate adenylyltransferase subunit 1 (469 aa).

Residues 22 to 236 (KDMLRVLTCG…LLNTVSVEQD (215 aa)) form the tr-type G domain. The interval 31 to 38 (GSVDDGKS) is G1. 31–38 (GSVDDGKS) contributes to the GTP binding site. The interval 89–93 (GITID) is G2. Residues 110 to 113 (DTPG) are G3. Residues 110 to 114 (DTPGH) and 165 to 168 (NKMD) each bind GTP. The G4 stretch occupies residues 165-168 (NKMD). Residues 202 to 204 (SAL) are G5.

The protein belongs to the TRAFAC class translation factor GTPase superfamily. Classic translation factor GTPase family. CysN/NodQ subfamily. As to quaternary structure, heterodimer composed of CysD, the smaller subunit, and CysN.

The catalysed reaction is sulfate + ATP + H(+) = adenosine 5'-phosphosulfate + diphosphate. It participates in sulfur metabolism; hydrogen sulfide biosynthesis; sulfite from sulfate: step 1/3. With CysD forms the ATP sulfurylase (ATPS) that catalyzes the adenylation of sulfate producing adenosine 5'-phosphosulfate (APS) and diphosphate, the first enzymatic step in sulfur assimilation pathway. APS synthesis involves the formation of a high-energy phosphoric-sulfuric acid anhydride bond driven by GTP hydrolysis by CysN coupled to ATP hydrolysis by CysD. This is Sulfate adenylyltransferase subunit 1 from Shewanella woodyi (strain ATCC 51908 / MS32).